The chain runs to 376 residues: Mitogen-activated protein kinase 4 (376 aa).

One can recognise a Protein kinase domain in the interval 43–329; the sequence is VPPLRPIGRG…VDEALCHPYL (287 aa). Residues 49-57 and Lys72 each bind ATP; that span reads IGRGAYGIV. Asp169 (proton acceptor) is an active-site residue. Thr201 is modified (phosphothreonine). Positions 201-203 match the TXY motif; that stretch reads TEY. Tyr203 carries the post-translational modification Phosphotyrosine.

Belongs to the protein kinase superfamily. CMGC Ser/Thr protein kinase family. MAP kinase subfamily. Interacts with MEKK1, MKK1, MKK2 and MKK6. May form a ternary complex composed of MEKK1 and MKK1/MKK2 and MPK4. Interacts with MKS1 and AP2C1. May form a ternary or larger complex with MKS1 and WRKY25 and/or WRKY33. Interacts with MAP65-1. No interactions with RACK1A, RACK1B or RACK1C. Interacts directly with ASR3 and mediates its phosphorylation. Binds to MEKK2. Interacts with PAT1. Binds to HT1. Dually phosphorylated on Thr-201 and Tyr-203, which activates the enzyme. Autophosphorylated on serine and tyrosine residues. Dephosphorylated by DSPTP1. Phosphorylated by MKK6 in vitro. Ubiquitous. Expressed in the veins and stomatal guard cells of leaf plates, petioles, stem, roots and flowers.

Its subcellular location is the cytoplasm. The protein localises to the nucleus. It is found in the cytoskeleton. It catalyses the reaction L-seryl-[protein] + ATP = O-phospho-L-seryl-[protein] + ADP + H(+). The catalysed reaction is L-threonyl-[protein] + ATP = O-phospho-L-threonyl-[protein] + ADP + H(+). Activated by threonine and tyrosine phosphorylation. Activated by the MAP kinase kinases MKK1 and MKK2. Activated in response to touch, wounding, low temperature, low humidity, salt stress and the bacterial elicitors flagellin and harpin. Activated upon Pseudomonas syringae pv. tomato DC3000 infection. Repressed by the protein phosphatase 2C AP2C1. Repressed by DSPTP1-mediated dephosphorylation. Activated by the MAP kinase kinase MKK6 in vitro. Its function is as follows. The ANPs-MKK6-MPK4 module is involved in the regulation of plant cytokinesis during meiosis and mitosis. Essential to promote the progression of cytokinesis and for cellularization (formation of the cell plate) during male-specific meiosis. Involved in cortical microtubules organization and stabilization by regulating the phosphorylation state of microtubule-associated proteins such as MAP65-1. Involved in root hair development process. Negative regulator of systemic acquired resistance (SAR) and salicylic acid- (SA) mediated defense response. Required for jasmonic acid- (JA) mediated defense gene expression. May regulate activity of transcription factor controlling pathogenesis-related (PR) gene expression. Seems to act independently of the SAR regulatory protein NPR1 (Nonexpresser of PR1). Phosphorylates MKS1 and transcription factors WRKY25 and WRKY33. The MEKK1, MKK1/MKK2 and MPK4 function in a signaling pathway that modulates the expression of genes responding to biotic and abiotic stresses and also plays an important role in pathogen defense by negatively regulating innate immunity. Phosphorylates MEKK2 upon treatment with flg22. Involved in stomatal movement regulation by repressing HT1 and HT1-mediated GHR1 phosphorylation. This Arabidopsis thaliana (Mouse-ear cress) protein is Mitogen-activated protein kinase 4.